The sequence spans 349 residues: AdoMet-dependent heme synthase (349 aa).

Positions 5-214 (TNAPRLIAWE…LHWFYEMQKE (210 aa)) constitute a Radical SAM core domain. [4Fe-4S] cluster contacts are provided by Cys19, Cys23, and Cys26.

The protein belongs to the radical SAM superfamily. [4Fe-4S] cluster is required as a cofactor.

The catalysed reaction is Fe-coproporphyrin III + 2 S-adenosyl-L-methionine = heme b + 2 5'-deoxyadenosine + 2 L-methionine + 2 CO2. It participates in porphyrin-containing compound metabolism; protoheme biosynthesis. In terms of biological role, involved in siroheme-dependent heme b biosynthesis. Catalyzes the conversion of Fe-coproporphyrin III into heme by the oxidative decarboxylation of two propionate side chains. This is AdoMet-dependent heme synthase from Methanosarcina barkeri (strain Fusaro / DSM 804).